The following is a 390-amino-acid chain: 8-demethyl-8-(2-methoxy-alpha-L-rhamnosyl)-tetracenomycin-C 3'-O-methyltransferase (390 aa).

S-adenosyl-L-methionine-binding positions include 202–208 (ELGIGGY), serine 217, aspartate 234, 252–253 (SQ), and aspartate 275. Aspartate 275 is a binding site for Mg(2+). Residue histidine 278 is the Proton acceptor of the active site. The Mg(2+) site is built by glutamate 303 and aspartate 304.

Belongs to the methyltransferase OleY/MycE family. It depends on Mg(2+) as a cofactor.

It catalyses the reaction 8-demethyl-8-(2-O-methyl-alpha-L-rhamnosyl)-tetracenomycin C + S-adenosyl-L-methionine = 8-demethyl-8-(2,3-di-O-methyl-alpha-L-rhamnosyl)-tetracenomycin C + S-adenosyl-L-homocysteine + H(+). The protein operates within antibiotic biosynthesis. Its function is as follows. O-methyltransferase involved in the biosynthesis of the permethylated L-rhamnose moiety of elloramycin, an antitumor polyketide. Mediates the methylation of the hydroxy groups at the 3'-position after the sugar moiety has been attached to the aglycon. The protein is 8-demethyl-8-(2-methoxy-alpha-L-rhamnosyl)-tetracenomycin-C 3'-O-methyltransferase of Streptomyces olivaceus.